Here is a 152-residue protein sequence, read N- to C-terminus: Protein Smg homolog (152 aa).

The protein belongs to the Smg family.

The chain is Protein Smg homolog from Nitrosomonas europaea (strain ATCC 19718 / CIP 103999 / KCTC 2705 / NBRC 14298).